The sequence spans 530 residues: Calnexin homolog 1 (530 aa).

Positions 1–20 (MRQRQLFSVFLLLLAFVSFQ) are cleaved as a signal peptide. The Lumenal portion of the chain corresponds to 21-466 (KLCYCDDQTV…EKAEQQPNLT (446 aa)). Ca(2+)-binding residues include Ser-34 and Asp-65. Residues Cys-108 and Cys-143 are joined by a disulfide bond. Positions 112, 114, 134, and 141 each coordinate an alpha-D-glucoside. Residues 216-315 (ALIPAKTIPD…KCEAAPGCGE (100 aa)) form a disordered region. Residues 223–356 (IPDPEDKKPE…RDIPNPDYFE (134 aa)) form a p domain (Extended arm) region. The span at 224–240 (PDPEDKKPEDWDERAKI) shows a compositional bias: basic and acidic residues. 5 repeat units span residues 225 to 236 (DPEDKKPEDWDE), 242 to 253 (DPNAVKPEDWDE), 261 to 272 (DEEAEKPEGWLD), 280 to 291 (DPEATKPEDWDD), and 295 to 305 (GMWEAPKIDNP). 2 4 X approximate repeats regions span residues 225–291 (DPED…DWDD) and 295–352 (GMWE…IPNP). Over residues 250–281 (DWDEDAPMEIEDEEAEKPEGWLDDEPEEVDDP) the composition is skewed to acidic residues. Cys-307 and Cys-313 are disulfide-bonded. Repeat copies occupy residues 314 to 324 (GEWKRPMKRNP), 328 to 338 (GKWSSPLIDNP), and 342 to 352 (GIWKPRDIPNP). Position 371 (Glu-371) interacts with an alpha-D-glucoside. Asp-382 contacts Ca(2+). The N-linked (GlcNAc...) asparagine glycan is linked to Asn-464. Residues 467-487 (IGVLVAIVVVFFSLFLKLIFG) form a helical membrane-spanning segment. At 488–530 (GKKAAAPVEKKKPEVAESSKSGDEAEKKEETAAPRKRQPRRDN) the chain is on the cytoplasmic side. The segment at 490-530 (KAAAPVEKKKPEVAESSKSGDEAEKKEETAAPRKRQPRRDN) is disordered. Basic and acidic residues predominate over residues 495 to 520 (VEKKKPEVAESSKSGDEAEKKEETAA). Ser-508 carries the post-translational modification Phosphoserine. Residues 521–530 (PRKRQPRRDN) show a composition bias toward basic residues.

This sequence belongs to the calreticulin family.

Its subcellular location is the endoplasmic reticulum membrane. Calcium-binding protein that interacts with newly synthesized monoglucosylated glycoproteins in the endoplasmic reticulum. It may act in assisting protein assembly and/or in the retention within the ER of unassembled protein subunits. It seems to play a major role in the quality control apparatus of the ER by the retention of incorrectly folded proteins. In Arabidopsis thaliana (Mouse-ear cress), this protein is Calnexin homolog 1 (CNX1).